Consider the following 472-residue polypeptide: Ribosomal protein uS12 methylthiotransferase RimO (472 aa).

Residues 33 to 143 form the MTTase N-terminal domain; it reads NRIGFVSLGC…VLKHVHKYVP (111 aa). [4Fe-4S] cluster is bound by residues Cys-42, Cys-78, Cys-107, Cys-175, Cys-179, and Cys-182. The 238-residue stretch at 161 to 398 folds into the Radical SAM core domain; that stretch reads LTPKHYAYLK…MEVQAEISAE (238 aa). In terms of domain architecture, TRAM spans 401 to 467; the sequence is ARFVGRTLDI…EHDLWAEVVD (67 aa).

Belongs to the methylthiotransferase family. RimO subfamily. Requires [4Fe-4S] cluster as cofactor.

It localises to the cytoplasm. It carries out the reaction L-aspartate(89)-[ribosomal protein uS12]-hydrogen + (sulfur carrier)-SH + AH2 + 2 S-adenosyl-L-methionine = 3-methylsulfanyl-L-aspartate(89)-[ribosomal protein uS12]-hydrogen + (sulfur carrier)-H + 5'-deoxyadenosine + L-methionine + A + S-adenosyl-L-homocysteine + 2 H(+). Its function is as follows. Catalyzes the methylthiolation of an aspartic acid residue of ribosomal protein uS12. The sequence is that of Ribosomal protein uS12 methylthiotransferase RimO from Shewanella baltica (strain OS195).